The sequence spans 136 residues: Transmembrane protein 203 (136 aa).

Residues 1–51 (MLFSLRELVQWLGFATFEIFVHLLALLVFSVLLALRVDGLTPGLSWWNVFV) form an interaction with STING1 region. 4 helical membrane passes run 14 to 34 (FATFEIFVHLLALLVFSVLLA), 50 to 72 (FVPFFAADGLSTYFTTIVSVRLF), 81 to 101 (VLRLFWVLTVLSLKFVFEMLL), and 112 to 132 (LWFGLITSPVFILLQLLMIRA). The required for lysosomal localization of the STING-TMEM203 complex stretch occupies residues 52–136 (PFFAADGLST…LLMIRACRVN (85 aa)).

Homodimer. Interacts with ATP2A2 and ITPR3. Interacts with STIM1 and STING1 (via transmembrane domain).

Its subcellular location is the endoplasmic reticulum membrane. The protein resides in the endoplasmic reticulum-Golgi intermediate compartment. It is found in the lysosome membrane. Involved in the regulation of cellular calcium homeotasis. Required for spermatogenesis. Acts as a regulator of STING-mediated inflammatory signaling in macrophages. Forms a complex with STING, promoting the activity of TBK1 kinase and the transcription factor IRF3, leading to activation of type I interferon expression. The chain is Transmembrane protein 203 (Tmem203) from Mus musculus (Mouse).